Here is a 473-residue protein sequence, read N- to C-terminus: 3-isopropylmalate dehydratase large subunit (473 aa).

[4Fe-4S] cluster is bound by residues C351, C414, and C417.

Belongs to the aconitase/IPM isomerase family. LeuC type 1 subfamily. As to quaternary structure, heterodimer of LeuC and LeuD. [4Fe-4S] cluster is required as a cofactor.

The catalysed reaction is (2R,3S)-3-isopropylmalate = (2S)-2-isopropylmalate. It functions in the pathway amino-acid biosynthesis; L-leucine biosynthesis; L-leucine from 3-methyl-2-oxobutanoate: step 2/4. Catalyzes the isomerization between 2-isopropylmalate and 3-isopropylmalate, via the formation of 2-isopropylmaleate. The chain is 3-isopropylmalate dehydratase large subunit from Paracidovorax citrulli (strain AAC00-1) (Acidovorax citrulli).